The chain runs to 777 residues: Elongation factor G, mitochondrial (777 aa).

A tr-type G domain is found at leucine 34–methionine 338. Residues alanine 43 to threonine 50, aspartate 136 to histidine 140, and asparagine 190 to aspartate 193 each bind GTP.

It belongs to the TRAFAC class translation factor GTPase superfamily. Classic translation factor GTPase family. EF-G/EF-2 subfamily.

Its subcellular location is the mitochondrion. Its pathway is protein biosynthesis; polypeptide chain elongation. Its function is as follows. Mitochondrial GTPase that catalyzes the GTP-dependent ribosomal translocation step during translation elongation. During this step, the ribosome changes from the pre-translocational (PRE) to the post-translocational (POST) state as the newly formed A-site-bound peptidyl-tRNA and P-site-bound deacylated tRNA move to the P and E sites, respectively. Catalyzes the coordinated movement of the two tRNA molecules, the mRNA and conformational changes in the ribosome. The chain is Elongation factor G, mitochondrial from Malassezia globosa (strain ATCC MYA-4612 / CBS 7966) (Dandruff-associated fungus).